The following is a 320-amino-acid chain: Malate dehydrogenase (320 aa).

Residues 8-13 and Asp33 each bind NAD(+); that span reads GAGQIG. Positions 82 and 88 each coordinate substrate. NAD(+) is bound by residues Asn95 and 118 to 120; that span reads ITN. Asn120 and Arg151 together coordinate substrate. Catalysis depends on His175, which acts as the Proton acceptor.

Belongs to the LDH/MDH superfamily. MDH type 3 family.

The enzyme catalyses (S)-malate + NAD(+) = oxaloacetate + NADH + H(+). In terms of biological role, catalyzes the reversible oxidation of malate to oxaloacetate. The protein is Malate dehydrogenase of Pelagibacter ubique (strain HTCC1062).